The sequence spans 311 residues: MTDLIGFYSDHKIAAPLAIAQRSAKFKPFAAEIARRGILQIATCARLEFYGEKSVLEDIDGKPFFGFSYGRVEGAISIAERLATIAAGVHSQILGEGFISGQLMQAIESGDPNLSIFKVARVAVDLGSAARKRQEFFAEFDYVQIVEDIIADRFSDKAPLDRIYIIGAGMLGQELIRGNVGERFRSTVVITRNPKKLRKRLNTGPKTNVTFMRPSEVGRTREPGSMVVIATTDVDNKYKAILQETLLRLGPRIILDLSSIPVLTREAIGELDYVNMYGDEFLRFIEQNNQRLAPKLPLVVSDIKAALGAAV.

Functionally, responsible for the nodulation efficiency and competitive ability of strain GR4 on alfalfa roots. The protein is Protein nfe2 (nfe2) of Rhizobium meliloti (Ensifer meliloti).